The primary structure comprises 417 residues: MAEIRNYTMNFGPQHPAAHGVLRLVMELDGEVIRRADPHIGLLHRATEKLAENKTYVQSVPYMDRLDYVSMMVNEHAYVMAIEKLLQIEVPIRAQYIRVMFDEITRILNHLLWLGAHALDVGAMTVFLYAFREREDLMDCYEAVSGARLHAAYYRPGGVYRDLPDNMPQYQPSAIHDEKATRARNENRQGSLLDFIEDFTRRFPGYIDDYEALLTDNRIWKQRLVDIGVVSPDRAKALGFTGPMLRGSGVEWDLRKKQPYEVYDQVDFDIPVGANGDCYDRYLVRIEEMRQSNHIIKQCVEWLRKNPGPVITDNHKVAPPSRLAMKQNMEEMIHHFKLFTEGMHVPRGEAYAAVEHPKGEFGIYIVSDGANKPYRLKIRAPGFAHLAALDEMTKGHMIADLVAIIGTQDIVFGEIDR.

Belongs to the complex I 49 kDa subunit family. As to quaternary structure, NDH-1 is composed of 14 different subunits. Subunits NuoB, C, D, E, F, and G constitute the peripheral sector of the complex.

The protein localises to the cell inner membrane. It catalyses the reaction a quinone + NADH + 5 H(+)(in) = a quinol + NAD(+) + 4 H(+)(out). Functionally, NDH-1 shuttles electrons from NADH, via FMN and iron-sulfur (Fe-S) centers, to quinones in the respiratory chain. The immediate electron acceptor for the enzyme in this species is believed to be ubiquinone. Couples the redox reaction to proton translocation (for every two electrons transferred, four hydrogen ions are translocated across the cytoplasmic membrane), and thus conserves the redox energy in a proton gradient. This is NADH-quinone oxidoreductase subunit D from Nitrosomonas europaea (strain ATCC 19718 / CIP 103999 / KCTC 2705 / NBRC 14298).